The following is a 690-amino-acid chain: Polyphosphate kinase (690 aa).

Position 45 (Asn45) interacts with ATP. The Mg(2+) site is built by Arg375 and Arg405. His435 serves as the catalytic Phosphohistidine intermediate. Residues Tyr468, Arg564, and His592 each contribute to the ATP site.

It belongs to the polyphosphate kinase 1 (PPK1) family. Requires Mg(2+) as cofactor. Post-translationally, an intermediate of this reaction is the autophosphorylated ppk in which a phosphate is covalently linked to a histidine residue through a N-P bond.

The enzyme catalyses [phosphate](n) + ATP = [phosphate](n+1) + ADP. Catalyzes the reversible transfer of the terminal phosphate of ATP to form a long-chain polyphosphate (polyP). This chain is Polyphosphate kinase, found in Pseudomonas aeruginosa (strain ATCC 15692 / DSM 22644 / CIP 104116 / JCM 14847 / LMG 12228 / 1C / PRS 101 / PAO1).